The primary structure comprises 63 residues: DNA gyrase inhibitor YacG (63 aa).

4 residues coordinate Zn(2+): Cys9, Cys12, Cys28, and Cys32.

It belongs to the DNA gyrase inhibitor YacG family. In terms of assembly, interacts with GyrB. Zn(2+) serves as cofactor.

Its function is as follows. Inhibits all the catalytic activities of DNA gyrase by preventing its interaction with DNA. Acts by binding directly to the C-terminal domain of GyrB, which probably disrupts DNA binding by the gyrase. This Salmonella arizonae (strain ATCC BAA-731 / CDC346-86 / RSK2980) protein is DNA gyrase inhibitor YacG.